Here is a 744-residue protein sequence, read N- to C-terminus: MASEGTNIPSPVVRQIDKQFLICSICLERYKNPKVLPCLHTFCERCLQNYIPAHSLTLSCPVCRQTSILPEKGVAALQNNFFITNLMDVLQRTPGSNVEESSILETVTAVAAGKPLSCPNHDGNVMEFYCQSCETAMCRECTEGEHAEHPTVPLKDVVEQHKASLQVQLDAVNKRLPEIDSALQFISEIIHQLTNQKASIVDDIHSTFDELQKTLNVRKSVLLMELEVNYGVKHKVLQSQLDTLLQGQESIKSCSNFTAQALNHGTETEVLLVKKQMSEKLNELADQDFPLHPRENDQLDFIVETEGLKKSIHNLGTILTTNAVASETVATGEGLRQTIIGQPMSVTITTKDKDGELCKTGNAYLTAELSTPDGSVADGEILDNKNGTYEFLYTVQKEGDFTLSLRLYDQHIRGSPFKLKVIRSADVSPTTEGVKRRVKSPGSGHVKQKAVKRPASMYSTGKRKENPIEDDLIFRVGTKGRNKGEFTNLQGVAASTSGKILIADSNNQCVQIFSNDGQFKSRFGIRGRSPGQLQRPTGVAVHPSGDIIIADYDNKWVSIFSSDGKFKTKIGSGKLMGPKGVSVDRNGHIIVVDNKACCVFIFQPNGKIVTRFGSRGNGDRQFAGPHFAAVNSNNEIIITDFHNHSVKVFNQEGEFMLKFGSNGEGNGQFNAPTGVAVDSNGNIIVADWGNSRIQVFDGSGSFLSYINTSADPLYGPQGLALTSDGHVVVADSGNHCFKVYRYLQ.

Ser-10 is modified (phosphoserine). An RING-type zinc finger spans residues 23 to 64 (CSICLERYKNPKVLPCLHTFCERCLQNYIPAHSLTLSCPVCR). A B box-type zinc finger spans residues 113–154 (GKPLSCPNHDGNVMEFYCQSCETAMCRECTEGEHAEHPTVPL). Residues Cys-118, His-121, Cys-141, and His-146 each contribute to the Zn(2+) site. A Filamin repeat occupies 320-421 (TTNAVASETV…IRGSPFKLKV (102 aa)). Thr-371 bears the Phosphothreonine mark. Phosphoserine occurs at positions 375, 424, and 428. Residues 432–462 (EGVKRRVKSPGSGHVKQKAVKRPASMYSTGK) are disordered. NHL repeat units lie at residues 473 to 516 (IFRV…FSND), 520 to 563 (KSRF…FSSD), 564 to 605 (GKFK…FQPN), 609 to 652 (VTRF…FNQE), 656 to 699 (MLKF…FDGS), and 700 to 743 (GSFL…YRYL).

The protein belongs to the TRIM/RBCC family. In terms of assembly, forms homooligomers. Interacts with TRIM3; this interaction reduces TRIM2 activity. Interacts with myosin V; myosin V may not be a substrate for ubiquitination. Interacts with NEFL. Interacts with phosphorylated BCL2L11. Interacts with SIRPA. In terms of processing, RING-type zinc finger-dependent and UBE2D1-dependent autoubiquitination.

Its subcellular location is the cytoplasm. The enzyme catalyses S-ubiquitinyl-[E2 ubiquitin-conjugating enzyme]-L-cysteine + [acceptor protein]-L-lysine = [E2 ubiquitin-conjugating enzyme]-L-cysteine + N(6)-ubiquitinyl-[acceptor protein]-L-lysine.. It participates in protein modification; protein ubiquitination. In terms of biological role, UBE2D1-dependent E3 ubiquitin-protein ligase that mediates the ubiquitination of NEFL and of phosphorylated BCL2L11. Plays a neuroprotective function. May play a role in neuronal rapid ischemic tolerance. Plays a role in antiviral immunity and limits New World arenavirus infection independently of its ubiquitin ligase activity. This chain is Tripartite motif-containing protein 2 (TRIM2), found in Callithrix jacchus (White-tufted-ear marmoset).